A 185-amino-acid chain; its full sequence is Ribosome-recycling factor (185 aa).

It belongs to the RRF family.

The protein localises to the cytoplasm. Responsible for the release of ribosomes from messenger RNA at the termination of protein biosynthesis. May increase the efficiency of translation by recycling ribosomes from one round of translation to another. The sequence is that of Ribosome-recycling factor from Thermosipho melanesiensis (strain DSM 12029 / CIP 104789 / BI429).